A 418-amino-acid polypeptide reads, in one-letter code: Transmembrane protease serine 11A (418 aa).

Over methionine 1 to tryptophan 18 the chain is Cytoplasmic. A helical; Signal-anchor for type II membrane protein transmembrane segment spans residues methionine 19 to valine 39. Residues histidine 40–isoleucine 418 are Extracellular-facing. Residues lysine 47–serine 164 enclose the SEA domain. The N-linked (GlcNAc...) asparagine glycan is linked to asparagine 153. In terms of domain architecture, Peptidase S1 spans isoleucine 187–glycine 417. The cysteines at positions 212 and 228 are disulfide-linked. Residues histidine 227 and aspartate 272 each act as charge relay system in the active site. An N-linked (GlcNAc...) asparagine glycan is attached at asparagine 303. 2 disulfide bridges follow: cysteine 337/cysteine 353 and cysteine 364/cysteine 393. The active-site Charge relay system is the serine 368.

It belongs to the peptidase S1 family. As to quaternary structure, may interact with ZBTB17. In terms of tissue distribution, expressed in esophagus, liver, colon and lung. Down-regulated in esophagus cancers.

It is found in the membrane. Its function is as follows. Probable serine protease which may play a role in cellular senescence. Overexpression inhibits cell growth and induce G1 cell cycle arrest. This Homo sapiens (Human) protein is Transmembrane protease serine 11A (TMPRSS11A).